The following is a 271-amino-acid chain: Dermonecrotic toxin LhSicTox-alphaIA2bv (271 aa).

Residue H3 is part of the active site. Mg(2+) is bound by residues E23 and D25. Cystine bridges form between C43-C49 and C45-C188. A Mg(2+)-binding site is contributed by D83.

Belongs to the arthropod phospholipase D family. Class II subfamily. Mg(2+) is required as a cofactor. As to expression, expressed by the venom gland.

The protein localises to the secreted. It carries out the reaction an N-(acyl)-sphingosylphosphocholine = an N-(acyl)-sphingosyl-1,3-cyclic phosphate + choline. It catalyses the reaction an N-(acyl)-sphingosylphosphoethanolamine = an N-(acyl)-sphingosyl-1,3-cyclic phosphate + ethanolamine. The catalysed reaction is a 1-acyl-sn-glycero-3-phosphocholine = a 1-acyl-sn-glycero-2,3-cyclic phosphate + choline. The enzyme catalyses a 1-acyl-sn-glycero-3-phosphoethanolamine = a 1-acyl-sn-glycero-2,3-cyclic phosphate + ethanolamine. Dermonecrotic toxins cleave the phosphodiester linkage between the phosphate and headgroup of certain phospholipids (sphingolipid and lysolipid substrates), forming an alcohol (often choline) and a cyclic phosphate. This toxin acts on sphingomyelin (SM). It may also act on ceramide phosphoethanolamine (CPE), lysophosphatidylcholine (LPC) and lysophosphatidylethanolamine (LPE), but not on lysophosphatidylserine (LPS), and lysophosphatidylglycerol (LPG). It acts by transphosphatidylation, releasing exclusively cyclic phosphate products as second products. Induces dermonecrosis, hemolysis, increased vascular permeability, edema, inflammatory response, and platelet aggregation. This chain is Dermonecrotic toxin LhSicTox-alphaIA2bv, found in Loxosceles hirsuta (Recluse spider).